The following is a 407-amino-acid chain: S-adenosylmethionine synthase (407 aa).

His19 contributes to the ATP binding site. Residue Asp21 participates in Mg(2+) binding. Glu47 is a K(+) binding site. Residues Glu60 and Gln103 each coordinate L-methionine. Positions 103–113 (QSQEIADGVDT) are flexible loop. The disordered stretch occupies residues 108–131 (ADGVDTSQEARGDGHFEEDDRAGA). ATP is bound by residues 178–180 (DGK), Asp258, 264–265 (RK), Ala281, and Lys285. L-methionine is bound at residue Asp258. Lys289 serves as a coordination point for L-methionine.

It belongs to the AdoMet synthase family. Homotetramer; dimer of dimers. The cofactor is Mg(2+). It depends on K(+) as a cofactor.

It localises to the cytoplasm. The enzyme catalyses L-methionine + ATP + H2O = S-adenosyl-L-methionine + phosphate + diphosphate. The protein operates within amino-acid biosynthesis; S-adenosyl-L-methionine biosynthesis; S-adenosyl-L-methionine from L-methionine: step 1/1. Functionally, catalyzes the formation of S-adenosylmethionine (AdoMet) from methionine and ATP. The overall synthetic reaction is composed of two sequential steps, AdoMet formation and the subsequent tripolyphosphate hydrolysis which occurs prior to release of AdoMet from the enzyme. In Corynebacterium efficiens (strain DSM 44549 / YS-314 / AJ 12310 / JCM 11189 / NBRC 100395), this protein is S-adenosylmethionine synthase.